Reading from the N-terminus, the 574-residue chain is DNA-directed primase/polymerase protein (574 aa).

Positions 2-22 (KRKWEERVKKVEELASYYERN) form a coiled coil. Residues arginine 76, 116 to 118 (DLE), 167 to 171 (KFSRH), 291 to 294 (RNFR), and lysine 300 contribute to the substrate site. Aspartate 116 and glutamate 118 together coordinate Mn(2+). Residues cysteine 424, histidine 431, cysteine 451, and cysteine 456 each coordinate Zn(2+). The Zinc knuckle motif signature appears at 424-457 (CENIGRAHRSNNIMILVDLKKEVWYQKCHDPVCR).

Belongs to the eukaryotic-type primase small subunit family. Requires Mn(2+) as cofactor.

It localises to the nucleus. The protein localises to the mitochondrion matrix. The protein resides in the chromosome. It catalyses the reaction ssDNA + n NTP = ssDNA/pppN(pN)n-1 hybrid + (n-1) diphosphate.. The enzyme catalyses DNA(n) + a 2'-deoxyribonucleoside 5'-triphosphate = DNA(n+1) + diphosphate. Its function is as follows. DNA primase and DNA polymerase required to tolerate replication-stalling lesions by bypassing them. Required to facilitate mitochondrial and nuclear replication fork progression by initiating de novo DNA synthesis using dNTPs and acting as an error-prone DNA polymerase able to bypass certain DNA lesions. Shows a high capacity to tolerate DNA damage lesions such as 8oxoG and abasic sites in DNA. Provides different translesion synthesis alternatives when DNA replication is stalled: able to synthesize DNA primers downstream of lesions, such as UV lesions, R-loops and G-quadruplexes, to allow DNA replication to continue. Can also realign primers ahead of 'unreadable lesions' such as abasic sites and 6-4 photoproduct (6-4 pyrimidine-pyrimidinone), thereby skipping the lesion. Repriming avoids fork degradation while leading to accumulation of internal ssDNA gaps behind the forks. Also able to incorporate nucleotides opposite DNA lesions such as 8oxoG, like a regular translesion synthesis DNA polymerase. Also required for reinitiating stalled forks after ultraviolet (UV) damage during nuclear DNA replication. Required for mitochondrial DNA (mtDNA) synthesis and replication, by reinitiating synthesis after UV damage or in the presence of chain-terminating nucleotides. In addition to its role in DNA damage response, also required to maintain efficient nuclear and mitochondrial DNA replication in unperturbed cells. This is DNA-directed primase/polymerase protein from Gallus gallus (Chicken).